Consider the following 300-residue polypeptide: UPF0761 membrane protein PSHAa0171 (300 aa).

6 helical membrane passes run Leu47–Phe67, Asn100–Ile120, Phe143–Val163, Phe181–Leu201, Ala215–Leu235, and Ala249–Leu269.

It belongs to the UPF0761 family.

It localises to the cell inner membrane. This Pseudoalteromonas translucida (strain TAC 125) protein is UPF0761 membrane protein PSHAa0171.